The sequence spans 1091 residues: ATPase family AAA domain-containing protein 2 (1091 aa).

A disordered region spans residues 32–211 (LEDLGVFNET…HFERRRKRSR (180 aa)). A compositionally biased stretch (basic and acidic residues) spans 53-62 (KQKDIQRTDE). Residues 74-119 (SSEEGEDQEHEDDGEDEDDEDEDDDDDDDDDDDDDEDDEDEEDGEE) show a composition bias toward acidic residues. A Glycyl lysine isopeptide (Lys-Gly) (interchain with G-Cter in SUMO2) cross-link involves residue lysine 148. Phosphoserine is present on residues serine 158, serine 168, serine 173, and serine 241. Position 298-305 (298-305 (GPPGTGKT)) interacts with ATP. Phosphoserine is present on residues serine 577 and serine 582. Coiled-coil stretches lie at residues 801-825 (LTAE…IFLR) and 917-943 (YAII…KKRG). The region spanning 811–923 (EQEEDTFREL…DTAYAIIKEE (113 aa)) is the Bromo domain. Residue lysine 959 forms a Glycyl lysine isopeptide (Lys-Gly) (interchain with G-Cter in SUMO2) linkage. A disordered region spans residues 961-985 (NSTLVGDKRSDPEQNEKLKTPSTPV). A compositionally biased stretch (basic and acidic residues) spans 966–979 (GDKRSDPEQNEKLK). Phosphoserine is present on serine 970. A Glycyl lysine isopeptide (Lys-Gly) (interchain with G-Cter in SUMO2) cross-link involves residue lysine 979. A phosphothreonine mark is found at threonine 980 and threonine 983. Serine 1003 bears the Phosphoserine mark. Threonine 1024 is modified (phosphothreonine).

It belongs to the AAA ATPase family. Interaction with ESR1 and NCOA3 is enhanced by estradiol. Interacts with acetylated lysine residues on histone H1.4, H2A, H2B and H3 (in vitro).

It localises to the nucleus. It catalyses the reaction ATP + H2O = ADP + phosphate + H(+). Its function is as follows. May be a transcriptional coactivator of the nuclear receptor ESR1 required to induce the expression of a subset of estradiol target genes, such as CCND1, MYC and E2F1. May play a role in the recruitment or occupancy of CREBBP at some ESR1 target gene promoters. May be required for histone hyperacetylation. In Pongo abelii (Sumatran orangutan), this protein is ATPase family AAA domain-containing protein 2 (ATAD2).